A 155-amino-acid chain; its full sequence is Ribosome maturation factor RimP (155 aa).

This sequence belongs to the RimP family.

It localises to the cytoplasm. Required for maturation of 30S ribosomal subunits. The protein is Ribosome maturation factor RimP of Listeria monocytogenes serotype 4a (strain HCC23).